Reading from the N-terminus, the 227-residue chain is MNGLRVAAKIQPARQTIIFLHGLGDTGSGWGFLAQYLQQRDPAAFQHTNFVFPNAPELHVTANGGALMPAWFDILEWDPSFSKVDSDGFMNSLNSIEKTVKQEIDKGIKPEQIIIGGFSQGAALALATSVTLPWKIGGIVALSGFCSIPGILKQHKNGINVKTPIFHGHGDMDPVVPIGLGIKAKQFYQDSCEIQNYEFKVYKGMAHSTVPDELEDLASFIKKSLSS.

Catalysis depends on charge relay system residues serine 119, aspartate 173, and histidine 207.

It belongs to the AB hydrolase superfamily. AB hydrolase 2 family.

The protein localises to the cytoplasm. The protein resides in the nucleus. The catalysed reaction is S-hexadecanoyl-L-cysteinyl-[protein] + H2O = L-cysteinyl-[protein] + hexadecanoate + H(+). Hydrolyzes fatty acids from S-acylated cysteine residues in proteins with a strong preference for palmitoylated G-alpha proteins over other acyl substrates. Mediates the deacylation of G-alpha proteins such as GPA1 in vivo, but has weak or no activity toward palmitoylated Ras proteins. Has weak lysophospholipase activity in vitro; however such activity may not exist in vivo. The chain is Acyl-protein thioesterase 1 from Saccharomyces cerevisiae (strain ATCC 204508 / S288c) (Baker's yeast).